Reading from the N-terminus, the 196-residue chain is Large ribosomal subunit protein uL18 (196 aa).

It belongs to the universal ribosomal protein uL18 family. As to quaternary structure, part of the 50S ribosomal subunit. Contacts the 5S and 23S rRNAs.

Its function is as follows. This is one of the proteins that bind and probably mediate the attachment of the 5S RNA into the large ribosomal subunit, where it forms part of the central protuberance. This Desulfurococcus amylolyticus (strain DSM 18924 / JCM 16383 / VKM B-2413 / 1221n) (Desulfurococcus kamchatkensis) protein is Large ribosomal subunit protein uL18.